A 254-amino-acid polypeptide reads, in one-letter code: Ubiquinone/menaquinone biosynthesis C-methyltransferase UbiE (254 aa).

Residues Thr-77, Asp-98, 126–127, and Ser-143 contribute to the S-adenosyl-L-methionine site; that span reads NA.

Belongs to the class I-like SAM-binding methyltransferase superfamily. MenG/UbiE family.

It carries out the reaction a 2-demethylmenaquinol + S-adenosyl-L-methionine = a menaquinol + S-adenosyl-L-homocysteine + H(+). The enzyme catalyses a 2-methoxy-6-(all-trans-polyprenyl)benzene-1,4-diol + S-adenosyl-L-methionine = a 5-methoxy-2-methyl-3-(all-trans-polyprenyl)benzene-1,4-diol + S-adenosyl-L-homocysteine + H(+). The protein operates within quinol/quinone metabolism; menaquinone biosynthesis; menaquinol from 1,4-dihydroxy-2-naphthoate: step 2/2. Its pathway is cofactor biosynthesis; ubiquinone biosynthesis. Functionally, methyltransferase required for the conversion of demethylmenaquinol (DMKH2) to menaquinol (MKH2) and the conversion of 2-polyprenyl-6-methoxy-1,4-benzoquinol (DDMQH2) to 2-polyprenyl-3-methyl-6-methoxy-1,4-benzoquinol (DMQH2). In Blochmanniella floridana, this protein is Ubiquinone/menaquinone biosynthesis C-methyltransferase UbiE.